The primary structure comprises 356 residues: MNISLLEGKKVVLLGQNVAKLEKLAQEYGEPAFRGRQIHEWLYQKGVRKLEEISVLPKLWRTTLSDQGVCTGRLEEVKRLVANDGTIKLLLETSDRESIEAVGIPTNSRLTTCVSSQVGCSMGCRFCATGKGGFQRSLEVHEIVDQVLSIREAFDRRPSHIVFMGMGEPLLNIESVLESISCLNNDLGIGQRRITVSTVGVVNTLPQLAELALAKLGRVQFTLALSLHAPNQHLREMLVPSAKVYPIQDLLSDCRHYLDITGRRISFEYILLATVNDKVEHAEELADLISGFQSHVNLIAYNPIDEEDYQRPSLARINRFMTVLQSRGVAVSLRASRGLDQDAACGQLRHQHTRLD.

Residue Glu100 is the Proton acceptor of the active site. The 235-residue stretch at 106 to 340 (TNSRLTTCVS…VSLRASRGLD (235 aa)) folds into the Radical SAM core domain. A disulfide bridge connects residues Cys113 and Cys345. The [4Fe-4S] cluster site is built by Cys120, Cys124, and Cys127. S-adenosyl-L-methionine is bound by residues 167–168 (GE), Ser197, 226–228 (SLH), and Asn302. The S-methylcysteine intermediate role is filled by Cys345.

The protein belongs to the radical SAM superfamily. RlmN family. Requires [4Fe-4S] cluster as cofactor.

It localises to the cytoplasm. The enzyme catalyses adenosine(2503) in 23S rRNA + 2 reduced [2Fe-2S]-[ferredoxin] + 2 S-adenosyl-L-methionine = 2-methyladenosine(2503) in 23S rRNA + 5'-deoxyadenosine + L-methionine + 2 oxidized [2Fe-2S]-[ferredoxin] + S-adenosyl-L-homocysteine. It catalyses the reaction adenosine(37) in tRNA + 2 reduced [2Fe-2S]-[ferredoxin] + 2 S-adenosyl-L-methionine = 2-methyladenosine(37) in tRNA + 5'-deoxyadenosine + L-methionine + 2 oxidized [2Fe-2S]-[ferredoxin] + S-adenosyl-L-homocysteine. Functionally, specifically methylates position 2 of adenine 2503 in 23S rRNA and position 2 of adenine 37 in tRNAs. The polypeptide is Probable dual-specificity RNA methyltransferase RlmN (Prochlorococcus marinus (strain MIT 9211)).